Reading from the N-terminus, the 591-residue chain is MTQGKIIKVSGPLVIASGMQEANIQDICRVGKLGLIGEIIEMRRDQASIQVYEETSGLGPGEPVVTTGEPLSVELGPGLISQMFDGIQRPLDRFKLATHNDFLVRGVEVPSLDRDIKWHFDSTIAIGQKVSTGDILGTVKETEVVNHKIMVPYGVSGEVVSIASGDFTIDEVVYEIKKLDGSFYKGTLMQKWPVRKARPVSKRLIPEEPLITGQRVIDAFFPVTKGGAAAVPGPFGAGKTVVQHQVAKFANVDIVIYVGCGERGNEMTDVLNEFPELIDPNTGQSIMQRTVLIANTSNMPVAAREASIYTGITMAEYFRDMGYSVAIMADSTSRWAEALREMSGRLEEMPGDEGYPAYLGSRIAEYYERAGRSQVLGLPEREGTITAIGAVSPPGGDISEPVTQNTLRIVKVFWGLDAPLAQRRHFPAINWLTSYSLYKDSVGTYIDGKEKTDWNSKITRAMNYLQRESSLEEIVRLVGIDSLSDNERLTMEIAKQIREDYLQQNAFDSVDTFTSFAKQEAMLSNILTFADQANHALELGSYFTEIMEGTVAVRDRMARSKYVSEDRLDEIKIISNEITHQIHLILETGGL.

Residue 233–240 (GPFGAGKT) coordinates ATP.

Belongs to the ATPase alpha/beta chains family.

It carries out the reaction ATP + H2O + 4 H(+)(in) = ADP + phosphate + 5 H(+)(out). Produces ATP from ADP in the presence of a proton gradient across the membrane. The V-type alpha chain is a catalytic subunit. The sequence is that of V-type ATP synthase alpha chain from Streptococcus pneumoniae (strain ATCC 700669 / Spain 23F-1).